The sequence spans 397 residues: Cephalotocin receptor 1 (397 aa).

Topologically, residues 1-48 (MRYITTHPNEISTQIWNNFSSTEIWSNFSAAKNETQPIRRNQDLANAE) are extracellular. N-linked (GlcNAc...) asparagine glycans are attached at residues asparagine 18, asparagine 27, and asparagine 33. The chain crosses the membrane as a helical span at residues 49–69 (VITLAVVIIITVIGNSIVLIT). Residues 70-91 (LFQRRKKLTRMHLFILHLSVTD) are Cytoplasmic-facing. Residues 92–112 (LFVAFFNNLPQMIWDITFLFL) form a helical membrane-spanning segment. Over 113-120 (GTDLLCRL) the chain is Extracellular. A disulfide bridge links cysteine 118 with cysteine 194. Residues 121-141 (VTYLQSVAMYASSYVLVATAI) form a helical membrane-spanning segment. The Cytoplasmic segment spans residues 142–162 (DRYFAICHPLSSHKWTTARVH). A helical membrane pass occupies residues 163 to 183 (VMVFIAWMLSFLFSTPQLFIW). Residues 184 to 205 (SMQFSNIGLTCQATFDPEWTLK) are Extracellular-facing. A helical membrane pass occupies residues 206–226 (FYITWLTVAIWILPTIALTLF). Residues 227–293 (YGMMCFAVWK…RGISRAKVRS (67 aa)) are Cytoplasmic-facing. Residues 294-314 (VALTLSVVACCFICWSPFFVC) form a helical membrane-spanning segment. Over 315-331 (QMWAAWDENAPYSGAIY) the chain is Extracellular. A helical membrane pass occupies residues 332–352 (TILLLLSSLNSCTNPWIYMIF). Topologically, residues 353 to 397 (SVFQHRAKTSRFVNDEETTSVTVLSSRNDIRLMSMKKKLEQTARN) are cytoplasmic.

This sequence belongs to the G-protein coupled receptor 1 family. Vasopressin/oxytocin receptor subfamily. In terms of tissue distribution, present in brain, buccal ganglion, gastric ganglion, olfactory lube, peduncle lobe, optical lobe, pancreas, the oviduct and the ovary.

The protein resides in the cell membrane. Functionally, acts as a receptor for cephalotocin. This is Cephalotocin receptor 1 from Octopus vulgaris (Common octopus).